The sequence spans 310 residues: MNNNLLIIAGPTAVGKSDLSVDLAKKLNGEIISVDSMQIYKYMDIGSAKISKEEMGGIPHYLIDFVDPSKEFSVAEFKELATEKIKDIQSRGKLPILVGGTGLYINSIICNMNFAESDKDEEYREELEKIANEHGNEYLHEMLKDIDLESYNSIHFNNRKRVIRALETYKLTGKPFSSFKAKNSIYETPYNIYYYVLNMDRAKLYERINKRVDIMFEKGLLEEVKNLKAMGLTDDMQSMKGIGYKEVLYYLDGKISLEQCIEMIKQGSRNYAKRQLTWFRKDPRAIFIDKDTFSSEEDISSKIINDIINS.

Residue 10-17 (GPTAVGKS) participates in ATP binding. 12 to 17 (TAVGKS) serves as a coordination point for substrate. Residues 35–38 (DSMQ) are interaction with substrate tRNA.

This sequence belongs to the IPP transferase family. Monomer. Mg(2+) is required as a cofactor.

The enzyme catalyses adenosine(37) in tRNA + dimethylallyl diphosphate = N(6)-dimethylallyladenosine(37) in tRNA + diphosphate. In terms of biological role, catalyzes the transfer of a dimethylallyl group onto the adenine at position 37 in tRNAs that read codons beginning with uridine, leading to the formation of N6-(dimethylallyl)adenosine (i(6)A). This is tRNA dimethylallyltransferase from Clostridium perfringens (strain SM101 / Type A).